Reading from the N-terminus, the 441-residue chain is ATP-dependent protease ATPase subunit HslU (441 aa).

Residues Ile18, 60-65 (GVGKTE), Asp254, Glu319, and Arg391 contribute to the ATP site.

Belongs to the ClpX chaperone family. HslU subfamily. In terms of assembly, a double ring-shaped homohexamer of HslV is capped on each side by a ring-shaped HslU homohexamer. The assembly of the HslU/HslV complex is dependent on binding of ATP.

Its subcellular location is the cytoplasm. Functionally, ATPase subunit of a proteasome-like degradation complex; this subunit has chaperone activity. The binding of ATP and its subsequent hydrolysis by HslU are essential for unfolding of protein substrates subsequently hydrolyzed by HslV. HslU recognizes the N-terminal part of its protein substrates and unfolds these before they are guided to HslV for hydrolysis. The sequence is that of ATP-dependent protease ATPase subunit HslU from Actinobacillus succinogenes (strain ATCC 55618 / DSM 22257 / CCUG 43843 / 130Z).